A 425-amino-acid chain; its full sequence is G protein-activated inward rectifier potassium channel 2 (425 aa).

Residues 1–91 are Cytoplasmic-facing; it reads MTMAKLTESM…IFTTLVDLKW (91 aa). Ser-18 and Ser-25 each carry phosphoserine. The helical transmembrane segment at 92–116 threads the bilayer; that stretch reads RFNLLIFVMVYTVTWLFFGMIWWLI. Over 117-140 the chain is Extracellular; that stretch reads AYIRGDMDHIEDPSWTPCVTNLNG. The segment at residues 141–152 is an intramembrane region (helical; Pore-forming); it reads FVSAFLFSIETE. Residues 153-159 constitute an intramembrane region (pore-forming); the sequence is TTIGYGY. The short motif at 154–159 is the Selectivity filter element; that stretch reads TIGYGY. The Extracellular portion of the chain corresponds to 160–168; that stretch reads RVITDKCPE. A helical membrane pass occupies residues 169–190; that stretch reads GIILLLIQSVLGSIVNAFMVGC. Residues 191 to 425 are Cytoplasmic-facing; that stretch reads MFVKISQPKK…VANLENESKV (235 aa). The tract at residues 392-425 is disordered; sequence NQHAELETEEEEKNPEELTERNGDVANLENESKV. Positions 422–425 match the PDZ-binding motif; that stretch reads ESKV.

The protein belongs to the inward rectifier-type potassium channel (TC 1.A.2.1) family. KCNJ6 subfamily. Associates with KCNJ3/GIRK1to form a G-protein-activated heteromultimer pore-forming unit. Associates with KCNJ5/GRIK4 to form a G-protein-activated heteromultimer pore-forming unit. The resulting inward current is much larger. Interacts (via PDZ-binding motif) with SNX27 (via PDZ domain); the interaction is required when endocytosed to prevent degradation in lysosomes and promote recycling to the plasma membrane. In terms of assembly, associates with KCNJ3/GRIK1 to form a G-protein-activated heteromultimer pore-forming unit. As to quaternary structure, associates with KCNJ3/GRIK1 to form a G-protein-activated heteromultimer pore-forming unit. The resulting inward current is much larger. Expressed in the brain.

It localises to the membrane. The catalysed reaction is K(+)(in) = K(+)(out). Its activity is regulated as follows. Activated by phosphatidylinositol 4,5 biphosphate (PtdIns(4,5)P2). Functionally, inward rectifier potassium channels are characterized by a greater tendency to allow potassium to flow into the cell rather than out of it. Their voltage dependence is regulated by the concentration of extracellular potassium; as external potassium is raised, the voltage range of the channel opening shifts to more positive voltages. The inward rectification is mainly due to the blockage of outward current by internal magnesium. This potassium channel is controlled by G proteins. Forms a functional channel in association with KCNJ3/GIRK1. In terms of biological role, inward rectifier potassium channels are characterized by a greater tendency to allow potassium to flow into the cell rather than out of it. Their voltage dependence is regulated by the concentration of extracellular potassium; as external potassium is raised, the voltage range of the channel opening shifts to more positive voltages. The inward rectification is mainly due to the blockage of outward current by internal magnesium. This potassium channel is controlled by G proteins. In Mus musculus (Mouse), this protein is G protein-activated inward rectifier potassium channel 2 (Kcnj6).